A 61-amino-acid polypeptide reads, in one-letter code: Bacteriocin sakacin-P (61 aa).

Residues 1–18 (MEKFIELSLKEVTAITGG) constitute a propeptide that is removed on maturation. A disulfide bond links C27 and C32.

Belongs to the bacteriocin class IIA/YGNGV family.

It localises to the secreted. Functionally, bactericidal activity; inhibits closely related Lactobacilli, Listeria monocytogenes and ivanovvi, Enterococcus faecalis, Carnobacterium sp and Brocothrix thermosphacta. The polypeptide is Bacteriocin sakacin-P (sakP) (Latilactobacillus sakei (Lactobacillus sakei)).